The primary structure comprises 336 residues: 3-isopropylmalate dehydrogenase (336 aa).

Substrate contacts are provided by arginine 87, arginine 97, arginine 121, and aspartate 211. Positions 211, 235, and 239 each coordinate Mg(2+). 271–283 (GSAPDIAGQGIAD) lines the NAD(+) pocket.

The protein belongs to the isocitrate and isopropylmalate dehydrogenases family. LeuB type 2 subfamily. Homodimer. The cofactor is Mg(2+). It depends on Mn(2+) as a cofactor.

Its subcellular location is the cytoplasm. The enzyme catalyses (2R,3S)-3-isopropylmalate + NAD(+) = 4-methyl-2-oxopentanoate + CO2 + NADH. The protein operates within amino-acid biosynthesis; L-leucine biosynthesis; L-leucine from 3-methyl-2-oxobutanoate: step 3/4. Functionally, catalyzes the oxidation of 3-carboxy-2-hydroxy-4-methylpentanoate (3-isopropylmalate) to 3-carboxy-4-methyl-2-oxopentanoate. The product decarboxylates to 4-methyl-2 oxopentanoate. The polypeptide is 3-isopropylmalate dehydrogenase (leuB) (Mycobacterium tuberculosis (strain CDC 1551 / Oshkosh)).